We begin with the raw amino-acid sequence, 387 residues long: Cysteine desulfurase IscS (387 aa).

Pyridoxal 5'-phosphate-binding positions include 73–74 (AT), asparagine 155, glutamine 183, and 203–205 (SAH). Lysine 206 bears the N6-(pyridoxal phosphate)lysine mark. Threonine 241 contributes to the pyridoxal 5'-phosphate binding site. The active-site Cysteine persulfide intermediate is the cysteine 328. Cysteine 328 lines the [2Fe-2S] cluster pocket.

Belongs to the class-V pyridoxal-phosphate-dependent aminotransferase family. NifS/IscS subfamily. In terms of assembly, homodimer. Forms a heterotetramer with IscU, interacts with other sulfur acceptors. Pyridoxal 5'-phosphate is required as a cofactor.

Its subcellular location is the cytoplasm. It carries out the reaction (sulfur carrier)-H + L-cysteine = (sulfur carrier)-SH + L-alanine. Its pathway is cofactor biosynthesis; iron-sulfur cluster biosynthesis. Master enzyme that delivers sulfur to a number of partners involved in Fe-S cluster assembly, tRNA modification or cofactor biosynthesis. Catalyzes the removal of elemental sulfur atoms from cysteine to produce alanine. Functions as a sulfur delivery protein for Fe-S cluster synthesis onto IscU, an Fe-S scaffold assembly protein, as well as other S acceptor proteins. The protein is Cysteine desulfurase IscS of Helicobacter pylori (strain Shi470).